The chain runs to 377 residues: RING-H2 finger protein ATL22 (377 aa).

The first 23 residues, 1–23 (MTSKLLPLLLNLIFLFFFPLLNA), serve as a signal peptide directing secretion. A helical membrane pass occupies residues 244-264 (IMCLSLVGPLTALTFCVGLVM). The segment at 327-369 (CPICLSEYATKETVRCLPECEHCFHTECIDAWLKLHSSCPVCR) adopts an RING-type; atypical zinc-finger fold.

Belongs to the RING-type zinc finger family. ATL subfamily.

It is found in the membrane. The catalysed reaction is S-ubiquitinyl-[E2 ubiquitin-conjugating enzyme]-L-cysteine + [acceptor protein]-L-lysine = [E2 ubiquitin-conjugating enzyme]-L-cysteine + N(6)-ubiquitinyl-[acceptor protein]-L-lysine.. It functions in the pathway protein modification; protein ubiquitination. This Arabidopsis thaliana (Mouse-ear cress) protein is RING-H2 finger protein ATL22 (ATL22).